A 792-amino-acid chain; its full sequence is Host cell factor 2 (792 aa).

Kelch repeat units follow at residues 34 to 79 (LMII…GFVC), 83 to 130 (RILV…RLGH), 207 to 255 (KMYV…VIGN), and 257 to 303 (MYIF…VSDS). A Fibronectin type-III 1 domain is found at 359–449 (APSQVQLIKA…QPATKETSMK (91 aa)). A disordered region spans residues 399-447 (ASSDSSAAPNMQGVRMDPHRQGSNNIVPNSINDTINSTKTEQPATKETS). Over residues 419-445 (QGSNNIVPNSINDTINSTKTEQPATKE) the composition is skewed to polar residues. A Glycyl lysine isopeptide (Lys-Gly) (interchain with G-Cter in SUMO2) cross-link involves residue Lys553. Fibronectin type-III domains are found at residues 583–675 (TPSN…TCIP) and 677–787 (FPGA…GNNK).

As to quaternary structure, binds KMT2A/MLL1. Component of the MLL1/MLL complex, at least composed of KMT2A/MLL1, ASH2L, RBBP5, DPY30, WDR5, MEN1, HCFC1 and HCFC2. Interacts with TASOR. Highly expressed in testis. Detected at lower levels in spleen, thymus, prostate, ovary, small intestine and colon.

The protein resides in the cytoplasm. It localises to the nucleus. In Homo sapiens (Human), this protein is Host cell factor 2 (HCFC2).